A 45-amino-acid polypeptide reads, in one-letter code: Host translation inhibitor E66L (45 aa).

The protein belongs to the asfivirus E66L family.

It localises to the host endoplasmic reticulum. Functionally, inhibits host protein translation, probably through the EIF2AK2/EIF2S1 signaling pathway. Promotes cell retention in the G0/G1 phase. The protein is Host translation inhibitor E66L of Ornithodoros (relapsing fever ticks).